The sequence spans 396 residues: Phosphoglycerate kinase (396 aa).

Residues 21–23 (DFN), arginine 36, 59–62 (HLGR), arginine 119, and arginine 156 contribute to the substrate site. Residues lysine 207, glutamate 325, and 352–355 (GGDS) each bind ATP.

The protein belongs to the phosphoglycerate kinase family. As to quaternary structure, monomer.

The protein localises to the cytoplasm. It carries out the reaction (2R)-3-phosphoglycerate + ATP = (2R)-3-phospho-glyceroyl phosphate + ADP. Its pathway is carbohydrate degradation; glycolysis; pyruvate from D-glyceraldehyde 3-phosphate: step 2/5. In Lacticaseibacillus casei (strain BL23) (Lactobacillus casei), this protein is Phosphoglycerate kinase.